Consider the following 490-residue polypeptide: Glutamyl-tRNA(Gln) amidotransferase subunit A (490 aa).

Catalysis depends on charge relay system residues lysine 76 and serine 151. Serine 175 serves as the catalytic Acyl-ester intermediate.

This sequence belongs to the amidase family. GatA subfamily. Heterotrimer of A, B and C subunits.

It carries out the reaction L-glutamyl-tRNA(Gln) + L-glutamine + ATP + H2O = L-glutaminyl-tRNA(Gln) + L-glutamate + ADP + phosphate + H(+). Allows the formation of correctly charged Gln-tRNA(Gln) through the transamidation of misacylated Glu-tRNA(Gln) in organisms which lack glutaminyl-tRNA synthetase. The reaction takes place in the presence of glutamine and ATP through an activated gamma-phospho-Glu-tRNA(Gln). The sequence is that of Glutamyl-tRNA(Gln) amidotransferase subunit A from Aromatoleum aromaticum (strain DSM 19018 / LMG 30748 / EbN1) (Azoarcus sp. (strain EbN1)).